The sequence spans 316 residues: Acetylglutamate kinase (316 aa).

Residues 65 to 66, arginine 87, and asparagine 179 each bind substrate; that span reads GG.

The protein belongs to the acetylglutamate kinase family. ArgB subfamily.

It is found in the cytoplasm. The catalysed reaction is N-acetyl-L-glutamate + ATP = N-acetyl-L-glutamyl 5-phosphate + ADP. It functions in the pathway amino-acid biosynthesis; L-arginine biosynthesis; N(2)-acetyl-L-ornithine from L-glutamate: step 2/4. Its function is as follows. Catalyzes the ATP-dependent phosphorylation of N-acetyl-L-glutamate. The protein is Acetylglutamate kinase of Alkaliphilus metalliredigens (strain QYMF).